Reading from the N-terminus, the 391-residue chain is Elongation factor Tu 2 (391 aa).

The tr-type G domain maps to 10–201; sequence KPHVNIGTIG…EVDRYIPTPE (192 aa). The tract at residues 19–26 is G1; it reads GHVDHGKT. 19-26 is a GTP binding site; the sequence is GHVDHGKT. Mg(2+) is bound at residue threonine 26. The interval 55-59 is G2; it reads GITIS. The G3 stretch occupies residues 76-79; that stretch reads DCPG. GTP-binding positions include 76-80 and 131-134; these read DCPGH and NKVD. The interval 131–134 is G4; that stretch reads NKVD. Positions 169-171 are G5; sequence SAL.

Belongs to the TRAFAC class translation factor GTPase superfamily. Classic translation factor GTPase family. EF-Tu/EF-1A subfamily. Monomer.

The protein resides in the cytoplasm. The catalysed reaction is GTP + H2O = GDP + phosphate + H(+). Functionally, GTP hydrolase that promotes the GTP-dependent binding of aminoacyl-tRNA to the A-site of ribosomes during protein biosynthesis. In Bartonella bacilliformis (strain ATCC 35685 / KC583 / Herrer 020/F12,63), this protein is Elongation factor Tu 2.